Here is a 456-residue protein sequence, read N- to C-terminus: 26S proteasome non-ATPase regulatory subunit 12 (456 aa).

Alanine 2 is subject to N-acetylalanine. Lysine 92 participates in a covalent cross-link: Glycyl lysine isopeptide (Lys-Gly) (interchain with G-Cter in SUMO1); alternate. Lysine 92 participates in a covalent cross-link: Glycyl lysine isopeptide (Lys-Gly) (interchain with G-Cter in SUMO2); alternate. The 179-residue stretch at 242 to 420 folds into the PCI domain; it reads SICKHYRAIY…GVINFQRPKD (179 aa). Lysine 368 bears the N6-acetyllysine mark.

This sequence belongs to the proteasome subunit p55 family. Component of the 19S proteasome regulatory particle complex. The 26S proteasome consists of a 20S core particle (CP) and two 19S regulatory subunits (RP). The regulatory particle is made of a lid composed of 9 subunits including PSMD12, a base containing 6 ATPases and few additional components. Interacts with ERCC6.

Its function is as follows. Component of the 26S proteasome, a multiprotein complex involved in the ATP-dependent degradation of ubiquitinated proteins. This complex plays a key role in the maintenance of protein homeostasis by removing misfolded or damaged proteins, which could impair cellular functions, and by removing proteins whose functions are no longer required. Therefore, the proteasome participates in numerous cellular processes, including cell cycle progression, apoptosis, or DNA damage repair. The polypeptide is 26S proteasome non-ATPase regulatory subunit 12 (Psmd12) (Mus musculus (Mouse)).